The following is a 511-amino-acid chain: MAGELYKWIMDATAGAPLPFSLALVAAAFVLYNIVSIITTAYFSPLSKIPGPWYAKLTDLRLTYSVFAGNRIYYVDSLHQKYGPMVRIGPKEVDVADPAAAREVHRMGTVFTKAPFYRLLSPGPVDNIFNFRDQKKHSQRRKLYAKGFTLVELRKNWESTINKTISMAVQKMKEEAANGDTELMGWWTLMANEIVCRLTFNGGHGTVEKGIKDPFVLMLEKRKGDLAHLLKMFIPPLYYVGRVLGKVNTRMNDIFYSQEKMFKAGAGVVKSARQDKEAGEFNQNLFAKALQEGEGDAATLTDTDIITDAGALLLAGSDPTAISLTFLIYLVLSRPELQKQLEEEVASIDGEVTDTVCEGLPLMNAIIDESMRLYGAAPGGLPRSPPAGGANLGGYYIPEGTVVDTQNWTLHTDGATWKEAQTFDHTRFLPENRLEFSEKQKMAFNPFGQGSRQCLGIHLGRLEMRLAVAHFFRELRGVKLAKSATPESMAVVDSFVAGVPRDRRCEVTMKA.

Residues 18-38 (LPFSLALVAAAFVLYNIVSII) form a helical membrane-spanning segment. Residues Asn162 and Asn407 are each glycosylated (N-linked (GlcNAc...) asparagine). Residue Cys454 coordinates heme.

It belongs to the cytochrome P450 family. It depends on heme as a cofactor.

Its subcellular location is the membrane. The protein operates within mycotoxin biosynthesis. Functionally, cytochrome P450 monooxygenase; part of the fragmented gene cluster that mediates the biosynthesis of dothistromin (DOTH), a polyketide toxin very similar in structure to the aflatoxin precursor, versicolorin B. The first step of the pathway is the conversion of acetate to norsolorinic acid (NOR) and requires the fatty acid synthase subunits hexA and hexB, as well as the polyketide synthase pksA. PksA combines a hexanoyl starter unit and 7 malonyl-CoA extender units to synthesize the precursor NOR. The hexanoyl starter unit is provided to the acyl-carrier protein (ACP) domain by the fungal fatty acid synthase hexA/hexB. The second step is the conversion of NOR to averantin (AVN) and requires the norsolorinic acid ketoreductase nor1, which catalyzes the dehydration of norsolorinic acid to form (1'S)-averantin. The cytochrome P450 monooxygenase avnA then catalyzes the hydroxylation of AVN to 5'hydroxyaverantin (HAVN). The next step is performed by adhA that transforms HAVN to averufin (AVF). Averufin might then be converted to hydroxyversicolorone by cypX and avfA. Hydroxyversicolorone is further converted versiconal hemiacetal acetate (VHA) by moxY. VHA is then the substrate for the versiconal hemiacetal acetate esterase est1 to yield versiconal (VAL). Versicolorin B synthase vbsA then converts VAL to versicolorin B (VERB) by closing the bisfuran ring. Then, the activity of the versicolorin B desaturase verB leads to versicolorin A (VERA). DotB, a predicted chloroperoxidase, may perform epoxidation of the A-ring of VERA. Alternatively, a cytochrome P450, such as cypX or avnA could catalyze this step. It is also possible that another, uncharacterized, cytochrome P450 enzyme is responsible for this step. Opening of the epoxide could potentially be achieved by the epoxide hydrolase epoA. However, epoA seems not to be required for DOTH biosynthesis, but other epoxide hydrolases may have the ability to complement this hydrolysis. Alternatively, opening of the epoxide ring could be achieved non-enzymatically. The next step is the deoxygenation of ring A to yield the 5,8-dihydroxyanthraquinone which is most likely catalyzed by the NADPH dehydrogenase encoded by ver1. The last stages of DOTH biosynthesis are proposed to involve hydroxylation of the bisfuran. OrdB and norB might have oxidative roles here. An alternative possibility is that cytochrome P450 monoogenases such as avnA and cypX might perform these steps in addition to previously proposed steps. The chain is Cytochrome P450 monooxygenase cypX from Dothistroma septosporum (Red band needle blight fungus).